A 162-amino-acid chain; its full sequence is Putative pre-16S rRNA nuclease (162 aa).

This sequence belongs to the YqgF nuclease family.

It localises to the cytoplasm. Its function is as follows. Could be a nuclease involved in processing of the 5'-end of pre-16S rRNA. The chain is Putative pre-16S rRNA nuclease from Brucella abortus (strain S19).